The primary structure comprises 157 residues: CAPA peptides (157 aa).

Residues 1 to 21 (MQPTMRIIVSMALLAYAVASA) form the signal peptide. Residues 22–28 (YHSNVKL) constitute a propeptide that is removed on maturation. Val-42 is subject to Valine amide. A propeptide spanning residues 45 to 66 (ASGNTWQLPLNDLYPEYEPAQV) is cleaved from the precursor. At Gln-69 the chain carries Pyrrolidone carboxylic acid; partial. Position 76 is a valine amide (Val-76). Residues Leu-85 and Leu-117 each carry the leucine amide modification. The propeptide occupies 120-157 (AFKNDDDEITIQNESNDHSEPEQTELIHEDRRKRQTLN). The disordered stretch occupies residues 131–157 (QNESNDHSEPEQTELIHEDRRKRQTLN). The segment covering 134–151 (SNDHSEPEQTELIHEDRR) has biased composition (basic and acidic residues).

The protein belongs to the pyrokinin family. In terms of tissue distribution, CAPA-periviscerokinin 1: Expressed in corpora cardiaca (CC), corpora allata (CA), antennal lobe (AL) and gnathal ganglion (GNG) (at protein level). Expression detected in most animals in CC and CA and in some animals in AL and GNG (at protein level). CAPA-periviscerokinin 2: Expressed in corpora cardiaca (CC), corpora allata (CA), antennal lobe (AL) and gnathal ganglion (GNG) (at protein level). For non-pyroglutamate form, expression in AL detected in all animals, in CC, CA and GNG in most animals (at protein level). For pyroglutamate form, expression in CC and CA detected in most animals, in AL and GNG in some animals (at protein level). CAPA-periviscerokinin 3: Expressed in corpora cardiaca (CC), corpora allata (CA), antennal lobe (AL) and gnathal ganglion (GNG). Expression detected in most animals in CC and CA and in some animals in AL and GNG (at protein level). CAPA-precursor-related peptide 3: Expressed in corpora cardiaca (CC), corpora allata (CA), antennal lobe (AL) and gnathal ganglion (GNG) (at protein level). Expression in CC and CA detected in some animals, expression in Al and GNG detected in few animals (at protein level). CAPA-trypto-pyrokinin: Expressed in corpora cardiaca (CC), corpora allata (CA), antennal lobe (AL) and gnathal ganglion (GNG) (at protein level). Expression in CC, CA and GNG detected in most animals, in AL in some animals (at protein level).

It is found in the secreted. Myoactive. This chain is CAPA peptides, found in Agrotis ipsilon (Black cutworm moth).